Reading from the N-terminus, the 71-residue chain is Large ribosomal subunit protein uL30 (71 aa).

This sequence belongs to the universal ribosomal protein uL30 family. Part of the 50S ribosomal subunit.

This chain is Large ribosomal subunit protein uL30, found in Mycolicibacterium paratuberculosis (strain ATCC BAA-968 / K-10) (Mycobacterium paratuberculosis).